Here is a 355-residue protein sequence, read N- to C-terminus: 3-dehydroquinate synthase (355 aa).

NAD(+)-binding positions include 105–109 (GVVGD), 129–130 (TS), lysine 142, lysine 151, and 169–172 (TLKT). Residues glutamate 184, histidine 246, and histidine 263 each coordinate Zn(2+).

It belongs to the sugar phosphate cyclases superfamily. Dehydroquinate synthase family. Requires Co(2+) as cofactor. Zn(2+) is required as a cofactor. NAD(+) serves as cofactor.

It localises to the cytoplasm. It carries out the reaction 7-phospho-2-dehydro-3-deoxy-D-arabino-heptonate = 3-dehydroquinate + phosphate. It functions in the pathway metabolic intermediate biosynthesis; chorismate biosynthesis; chorismate from D-erythrose 4-phosphate and phosphoenolpyruvate: step 2/7. Catalyzes the conversion of 3-deoxy-D-arabino-heptulosonate 7-phosphate (DAHP) to dehydroquinate (DHQ). This chain is 3-dehydroquinate synthase, found in Streptococcus agalactiae serotype Ia (strain ATCC 27591 / A909 / CDC SS700).